The following is a 193-amino-acid chain: Ion-translocating oxidoreductase complex subunit A (193 aa).

6 consecutive transmembrane segments (helical) span residues 5–25 (LLLLVGTVLINNFVLVKFLGL), 39–59 (IGMGLATTFVMTLASACSYLM), 63–83 (ILIPLNIAYLRTLAFILVIAV), 102–122 (LLGIFLPLITTNCAVLGVALL), 134–154 (IIYGFGAATGFSLVLILFAAM), and 171–191 (SIAMITAGLMSLAFMGFTGLI).

It belongs to the NqrDE/RnfAE family. In terms of assembly, the complex is composed of six subunits: RnfA, RnfB, RnfC, RnfD, RnfE and RnfG.

The protein localises to the cell inner membrane. Part of a membrane-bound complex that couples electron transfer with translocation of ions across the membrane. This is Ion-translocating oxidoreductase complex subunit A from Aeromonas hydrophila subsp. hydrophila (strain ATCC 7966 / DSM 30187 / BCRC 13018 / CCUG 14551 / JCM 1027 / KCTC 2358 / NCIMB 9240 / NCTC 8049).